Consider the following 203-residue polypeptide: Urease accessory protein UreG (203 aa).

Gly11–Thr18 provides a ligand contact to GTP.

It belongs to the SIMIBI class G3E GTPase family. UreG subfamily. As to quaternary structure, homodimer. UreD, UreF and UreG form a complex that acts as a GTP-hydrolysis-dependent molecular chaperone, activating the urease apoprotein by helping to assemble the nickel containing metallocenter of UreC. The UreE protein probably delivers the nickel.

The protein localises to the cytoplasm. Its function is as follows. Facilitates the functional incorporation of the urease nickel metallocenter. This process requires GTP hydrolysis, probably effectuated by UreG. This chain is Urease accessory protein UreG, found in Prochlorococcus marinus (strain MIT 9215).